An 861-amino-acid polypeptide reads, in one-letter code: Bifunctional uridylyltransferase/uridylyl-removing enzyme (861 aa).

The interval 1-321 (MKNDNRIIKN…VYHQKQKIIR (321 aa)) is uridylyltransferase. The segment at 322-678 (LDDEFQLSNR…IMPHHSQGGT (357 aa)) is uridylyl-removing. An HD domain is found at 440-562 (VDQHTLFVIR…LPHARYLDYL (123 aa)). 2 consecutive ACT domains span residues 679 to 760 (EVFI…AVSR) and 788 to 861 (QLFL…KSKY).

It belongs to the GlnD family. The cofactor is Mg(2+).

It carries out the reaction [protein-PII]-L-tyrosine + UTP = [protein-PII]-uridylyl-L-tyrosine + diphosphate. The enzyme catalyses [protein-PII]-uridylyl-L-tyrosine + H2O = [protein-PII]-L-tyrosine + UMP + H(+). Uridylyltransferase (UTase) activity is inhibited by glutamine, while glutamine activates uridylyl-removing (UR) activity. In terms of biological role, modifies, by uridylylation and deuridylylation, the PII regulatory proteins (GlnB and homologs), in response to the nitrogen status of the cell that GlnD senses through the glutamine level. Under low glutamine levels, catalyzes the conversion of the PII proteins and UTP to PII-UMP and PPi, while under higher glutamine levels, GlnD hydrolyzes PII-UMP to PII and UMP (deuridylylation). Thus, controls uridylylation state and activity of the PII proteins, and plays an important role in the regulation of nitrogen assimilation and metabolism. This chain is Bifunctional uridylyltransferase/uridylyl-removing enzyme, found in Legionella pneumophila (strain Paris).